We begin with the raw amino-acid sequence, 143 residues long: Peptide methionine sulfoxide reductase MsrB (143 aa).

Positions 16–139 constitute a MsrB domain; the sequence is DAELRRRLTP…NSAALNFESR (124 aa). Zn(2+) is bound by residues cysteine 55, cysteine 58, cysteine 104, and cysteine 107. The active-site Nucleophile is cysteine 128.

The protein belongs to the MsrB Met sulfoxide reductase family. It depends on Zn(2+) as a cofactor.

The catalysed reaction is L-methionyl-[protein] + [thioredoxin]-disulfide + H2O = L-methionyl-(R)-S-oxide-[protein] + [thioredoxin]-dithiol. In Burkholderia vietnamiensis (strain G4 / LMG 22486) (Burkholderia cepacia (strain R1808)), this protein is Peptide methionine sulfoxide reductase MsrB.